We begin with the raw amino-acid sequence, 291 residues long: Ribosomal RNA small subunit methyltransferase I (291 aa).

This sequence belongs to the methyltransferase superfamily. RsmI family.

The protein resides in the cytoplasm. The enzyme catalyses cytidine(1402) in 16S rRNA + S-adenosyl-L-methionine = 2'-O-methylcytidine(1402) in 16S rRNA + S-adenosyl-L-homocysteine + H(+). Catalyzes the 2'-O-methylation of the ribose of cytidine 1402 (C1402) in 16S rRNA. The protein is Ribosomal RNA small subunit methyltransferase I of Neisseria meningitidis serogroup B (strain ATCC BAA-335 / MC58).